Consider the following 163-residue polypeptide: Putative phosphinothricin acetyltransferase YwnH (163 aa).

The N-acetyltransferase domain maps to 1–158; it reads MTLRLAEHRD…DGKRYDLKIL (158 aa). Acetyl-CoA contacts are provided by residues 85–87, 94–98, and 124–126; these read IYI, KGVGS, and NKP.

It belongs to the acetyltransferase family. PAT/BAR subfamily.

The enzyme catalyses phosphinothricin + acetyl-CoA = N-acetylphosphinothricin + CoA + H(+). This enzyme is an effector of phosphinothricin tripeptide (PTT or bialaphos) resistance. Inactivates PTT by transfer of an acetyl group. The chain is Putative phosphinothricin acetyltransferase YwnH (ywnH) from Bacillus subtilis (strain 168).